The following is a 548-amino-acid chain: NAD(P)H-quinone oxidoreductase chain 4 (548 aa).

14 helical membrane-spanning segments follow: residues 17–37 (VPWLSLSILVPIGGALLIPFI), 48–68 (WYALIVTLITFLITVAAYLTG), 103–123 (LILLTSFITSLACLAAWPVTF), 127–147 (LFFFLLLAMDGGQIAVFAVQD), 149–169 (LLFFLAWELELLPVYLLLAIW), 181–201 (FILYTAGSSLFILLAALAMGF), 222–242 (GFQLLCYAGLLIAFGVKLPIV), 256–276 (TAPVHMLLAGILLKMGGYALL), 290–310 (FAPLLIVLGVVNIIYAALTSF), 327–347 (MGFVLIGIGSFSVLGSSGAML), 348–368 (QMISHGLIGASLFFLVGATYD), 389–409 (FALWTVCALASLALPGMSGFV), 430–450 (VVICGLAAVGVVLTPVYLLSM), and 477–497 (VYIIGCLLVPIIGIGLYPRLM).

The protein belongs to the complex I subunit 4 family.

Its subcellular location is the cellular thylakoid membrane. It catalyses the reaction a plastoquinone + NADH + (n+1) H(+)(in) = a plastoquinol + NAD(+) + n H(+)(out). The catalysed reaction is a plastoquinone + NADPH + (n+1) H(+)(in) = a plastoquinol + NADP(+) + n H(+)(out). Functionally, NDH-1 shuttles electrons from NAD(P)H, via FMN and iron-sulfur (Fe-S) centers, to quinones in the respiratory chain. The immediate electron acceptor for the enzyme in this species is believed to be plastoquinone. Couples the redox reaction to proton translocation (for every two electrons transferred, four hydrogen ions are translocated across the cytoplasmic membrane), and thus conserves the redox energy in a proton gradient. In Synechococcus sp. (strain CC9902), this protein is NAD(P)H-quinone oxidoreductase chain 4.